Consider the following 366-residue polypeptide: tRNA/tmRNA (uracil-C(5))-methyltransferase (366 aa).

S-adenosyl-L-methionine is bound by residues Q190, Y218, N223, E239, and D299. The Nucleophile role is filled by C324. E358 serves as the catalytic Proton acceptor.

The protein belongs to the class I-like SAM-binding methyltransferase superfamily. RNA M5U methyltransferase family. TrmA subfamily.

The enzyme catalyses uridine(54) in tRNA + S-adenosyl-L-methionine = 5-methyluridine(54) in tRNA + S-adenosyl-L-homocysteine + H(+). The catalysed reaction is uridine(341) in tmRNA + S-adenosyl-L-methionine = 5-methyluridine(341) in tmRNA + S-adenosyl-L-homocysteine + H(+). Dual-specificity methyltransferase that catalyzes the formation of 5-methyluridine at position 54 (m5U54) in all tRNAs, and that of position 341 (m5U341) in tmRNA (transfer-mRNA). The chain is tRNA/tmRNA (uracil-C(5))-methyltransferase from Salmonella paratyphi B (strain ATCC BAA-1250 / SPB7).